A 141-amino-acid polypeptide reads, in one-letter code: Hemoglobin subunit alpha-D/D' (141 aa).

A Globin domain is found at 1 to 141 (MLTADDKKLI…VAAVLAEKYR (141 aa)). Heme b is bound by residues H58 and H87.

This sequence belongs to the globin family. Heterotetramer of two alpha-D chains and two beta chains. As to expression, red blood cells.

Functionally, involved in oxygen transport from the lung to the various peripheral tissues. This is Hemoglobin subunit alpha-D/D' (HBAD) from Gyps rueppelli (Rueppell's griffon).